Reading from the N-terminus, the 273-residue chain is NADPH-dependent 7-cyano-7-deazaguanine reductase (273 aa).

Residue 81-83 (VES) coordinates substrate. 83-84 (SK) is an NADPH binding site. Cysteine 179 acts as the Thioimide intermediate in catalysis. Aspartate 186 functions as the Proton donor in the catalytic mechanism. Residue 218–219 (AE) coordinates substrate. Position 247–248 (247–248 (RG)) interacts with NADPH.

The protein belongs to the GTP cyclohydrolase I family. QueF type 2 subfamily. Homodimer.

The protein localises to the cytoplasm. It carries out the reaction 7-aminomethyl-7-carbaguanine + 2 NADP(+) = 7-cyano-7-deazaguanine + 2 NADPH + 3 H(+). Its pathway is tRNA modification; tRNA-queuosine biosynthesis. In terms of biological role, catalyzes the NADPH-dependent reduction of 7-cyano-7-deazaguanine (preQ0) to 7-aminomethyl-7-deazaguanine (preQ1). The sequence is that of NADPH-dependent 7-cyano-7-deazaguanine reductase from Rickettsia prowazekii (strain Madrid E).